We begin with the raw amino-acid sequence, 304 residues long: Aspartate carbamoyltransferase catalytic subunit (304 aa).

Residues Arg49 and Thr50 each coordinate carbamoyl phosphate. Lys77 serves as a coordination point for L-aspartate. The carbamoyl phosphate site is built by Arg99, His127, and Gln130. L-aspartate contacts are provided by Arg160 and Arg211. Residues Ala252 and Pro253 each contribute to the carbamoyl phosphate site.

The protein belongs to the aspartate/ornithine carbamoyltransferase superfamily. ATCase family. As to quaternary structure, heterododecamer (2C3:3R2) of six catalytic PyrB chains organized as two trimers (C3), and six regulatory PyrI chains organized as three dimers (R2).

It carries out the reaction carbamoyl phosphate + L-aspartate = N-carbamoyl-L-aspartate + phosphate + H(+). It participates in pyrimidine metabolism; UMP biosynthesis via de novo pathway; (S)-dihydroorotate from bicarbonate: step 2/3. In terms of biological role, catalyzes the condensation of carbamoyl phosphate and aspartate to form carbamoyl aspartate and inorganic phosphate, the committed step in the de novo pyrimidine nucleotide biosynthesis pathway. This is Aspartate carbamoyltransferase catalytic subunit from Bacillus mycoides (strain KBAB4) (Bacillus weihenstephanensis).